The sequence spans 348 residues: RNA 3'-terminal phosphate cyclase (348 aa).

Residues Q101 and 286-289 (HMAD) each bind ATP. Residue H312 is the Tele-AMP-histidine intermediate of the active site.

Belongs to the RNA 3'-terminal cyclase family. Type 1 subfamily.

The protein resides in the cytoplasm. The enzyme catalyses a 3'-end 3'-phospho-ribonucleotide-RNA + ATP = a 3'-end 2',3'-cyclophospho-ribonucleotide-RNA + AMP + diphosphate. Functionally, catalyzes the conversion of 3'-phosphate to a 2',3'-cyclic phosphodiester at the end of RNA. The mechanism of action of the enzyme occurs in 3 steps: (A) adenylation of the enzyme by ATP; (B) transfer of adenylate to an RNA-N3'P to produce RNA-N3'PP5'A; (C) and attack of the adjacent 2'-hydroxyl on the 3'-phosphorus in the diester linkage to produce the cyclic end product. The biological role of this enzyme is unknown but it is likely to function in some aspects of cellular RNA processing. The polypeptide is RNA 3'-terminal phosphate cyclase (Pyrobaculum aerophilum (strain ATCC 51768 / DSM 7523 / JCM 9630 / CIP 104966 / NBRC 100827 / IM2)).